We begin with the raw amino-acid sequence, 112 residues long: Mu-ctenitoxin-Pn1a (112 aa).

Positions 1 to 19 are cleaved as a signal peptide; it reads MKLLGIFLVASFAFVLSFG. The propeptide occupies 20 to 33; that stretch reads EEMIEGENPLEDQR. Intrachain disulfides connect Cys39–Cys56, Cys46–Cys62, Cys53–Cys85, Cys55–Cys73, Cys64–Cys71, Cys91–Cys106, and Cys102–Cys110. Gly111 bears the Glycine amide mark.

Belongs to the neurotoxin 04 (omega-agtx) family. 02 (Tx1) subfamily. Contains 7 disulfide bonds. As to expression, expressed by the venom gland.

It localises to the secreted. Its function is as follows. Reversible inhibitor of neuronal sodium channels (Nav1.2/ SCN2A) that binds in proximity to site 1 and displays increasing affinity as the membrane potential is depolarized. Induces excitatory symptoms and spastic paralysis in mice. The sequence is that of Mu-ctenitoxin-Pn1a from Phoneutria nigriventer (Brazilian armed spider).